Reading from the N-terminus, the 334-residue chain is Desumoylating isopeptidase 1 homolog (334 aa).

The PPPDE domain maps to 30-174 (TVVRLNVYDM…FLEKCIPQEW (145 aa)). Catalysis depends on residues histidine 55 and cysteine 133. The segment covering 310 to 325 (SNIGKTNSTPGTTSNG) has biased composition (polar residues). Residues 310–334 (SNIGKTNSTPGTTSNGLAKPTCSEC) are disordered.

The protein belongs to the DeSI family. As to expression, expressed in the pharynx, hypodermis, intestine, head neuron and tail neuron.

Its subcellular location is the cytoplasm. It localises to the nucleus. Protease which deconjugates SUMO from some substrate proteins. Has isopeptidase but not SUMO-processing activity. Collaborates with ubql-1 in the export of ubiquitinated proteins from the nucleus to the cytoplasm. The sequence is that of Desumoylating isopeptidase 1 homolog from Caenorhabditis elegans.